The sequence spans 201 residues: Large ribosomal subunit protein uL18 (201 aa).

Belongs to the universal ribosomal protein uL18 family. Part of the 50S ribosomal subunit. Contacts the 5S and 23S rRNAs.

This is one of the proteins that bind and probably mediate the attachment of the 5S RNA into the large ribosomal subunit, where it forms part of the central protuberance. The polypeptide is Large ribosomal subunit protein uL18 (Thermococcus kodakarensis (strain ATCC BAA-918 / JCM 12380 / KOD1) (Pyrococcus kodakaraensis (strain KOD1))).